The chain runs to 192 residues: Protein GrpE (192 aa).

A disordered region spans residues 1–34; it reads MSSKEQKTPNEQVSEEMENTAEQQVEATQETGEC. The segment covering 20–31 has biased composition (polar residues); that stretch reads TAEQQVEATQET.

It belongs to the GrpE family. As to quaternary structure, homodimer.

Its subcellular location is the cytoplasm. In terms of biological role, participates actively in the response to hyperosmotic and heat shock by preventing the aggregation of stress-denatured proteins, in association with DnaK and GrpE. It is the nucleotide exchange factor for DnaK and may function as a thermosensor. Unfolded proteins bind initially to DnaJ; upon interaction with the DnaJ-bound protein, DnaK hydrolyzes its bound ATP, resulting in the formation of a stable complex. GrpE releases ADP from DnaK; ATP binding to DnaK triggers the release of the substrate protein, thus completing the reaction cycle. Several rounds of ATP-dependent interactions between DnaJ, DnaK and GrpE are required for fully efficient folding. The chain is Protein GrpE from Yersinia pestis.